A 96-amino-acid chain; its full sequence is U6 snRNA-associated Sm-like protein LSm8 (96 aa).

The Sm domain maps to 1–76; it reads MTSALENYIN…VAVIGEIDEE (76 aa). Thr2 carries the N-acetylthreonine modification.

This sequence belongs to the snRNP Sm proteins family. In terms of assembly, component of the precatalytic spliceosome (spliceosome B complex). Component of the U4/U6-U5 tri-snRNP complex, a building block of the precatalytic spliceosome (spliceosome B complex). The U4/U6-U5 tri-snRNP complex is composed of the U4, U6 and U5 snRNAs and at least PRPF3, PRPF4, PRPF6, PRPF8, PRPF31, SNRNP200, TXNL4A, SNRNP40, SNRPB, SNRPD1, SNRPD2, SNRPD3, SNRPE, SNRPF, SNRPG, DDX23, CD2BP2, PPIH, SNU13, EFTUD2, SART1 and USP39, plus LSM2, LSM3, LSM4, LSM5, LSM6, LSM7 and LSM8. LSM2, LSM3, LSM4, LSM5, LSM6, LSM7 and LSM8 form a heptameric, ring-shaped subcomplex (the LSM2-8 complex) that is part of the U4/U6-U5 tri-snRNP complex and the precatalytic spliceosome.

It localises to the nucleus. Functionally, plays a role in pre-mRNA splicing as component of the U4/U6-U5 tri-snRNP complex that is involved in spliceosome assembly, and as component of the precatalytic spliceosome (spliceosome B complex). The heptameric LSM2-8 complex binds specifically to the 3'-terminal U-tract of U6 snRNA. The chain is U6 snRNA-associated Sm-like protein LSm8 (LSM8) from Bos taurus (Bovine).